The sequence spans 615 residues: MTKTNKIIGIDLGTTNSCVAVMEGGEAKVIPNAEGGRTTPSVVSFKGDEIMVGEIAKRQVITNPNTISSIKRHMGEANYTVNVGGKKYTPQEISAMILANLKKTAEDYLGAQVSEAVITVPAYFNDAQRQATKDAGKIAGLNVKRIINEPTAAALSYGVDKGDKEQTILVFDLGGGTFDVSILTLVDGTFEVLSTSGDNALGGDDFDLRIVDFLVQEFKKENSVDLSKDKMAMQRLKDAAEKAKKELSGVTSSQISLPFLTMSEAGPLHLEYNMTRAKFNELTKDLIDRCLAPVKRALGDAKLDIEKIDQVLLVGGSTRIPAVQDLVKNELKKTPNKSINPDEVVGIGAAIQGGILSGDVKDILTLLDVTPLSLGIETLGNVFTKLIERNSTIPTSEKQVFSTAADNLPAVDIHVLQGERPLAADNKTLGRFQLTDRPPHRAEFLKLKITFDLDANGIVSVKAKDLGTNKEQKITISGSGALKEEEIQRMIREAEENAEVDRVKKESIDARNEAENMIFHTKKSLEDLKADVTPEEKDKVETQIKELEEALKGDDTALIKEKTASLTKESQGIAMKAYQKAQEKQAQEKGTQENTTAKNEKPQDEVVDADFEEKK.

Thr-177 carries the post-translational modification Phosphothreonine; by autocatalysis. The interval 567–615 (TKESQGIAMKAYQKAQEKQAQEKGTQENTTAKNEKPQDEVVDADFEEKK) is disordered. Residues 581–591 (AQEKQAQEKGT) show a composition bias toward basic and acidic residues. A compositionally biased stretch (acidic residues) spans 605–615 (EVVDADFEEKK).

Belongs to the heat shock protein 70 family.

Its function is as follows. Acts as a chaperone. In Onion yellows phytoplasma (strain OY-M), this protein is Chaperone protein DnaK.